Consider the following 72-residue polypeptide: Translation initiation factor IF-1 (72 aa).

Residues 1-72 (MAKTDLLEVQ…ERGRIVFRHK (72 aa)) form the S1-like domain.

Belongs to the IF-1 family. Component of the 30S ribosomal translation pre-initiation complex which assembles on the 30S ribosome in the order IF-2 and IF-3, IF-1 and N-formylmethionyl-tRNA(fMet); mRNA recruitment can occur at any time during PIC assembly.

Its subcellular location is the cytoplasm. One of the essential components for the initiation of protein synthesis. Stabilizes the binding of IF-2 and IF-3 on the 30S subunit to which N-formylmethionyl-tRNA(fMet) subsequently binds. Helps modulate mRNA selection, yielding the 30S pre-initiation complex (PIC). Upon addition of the 50S ribosomal subunit IF-1, IF-2 and IF-3 are released leaving the mature 70S translation initiation complex. The chain is Translation initiation factor IF-1 from Spiroplasma kunkelii.